Consider the following 347-residue polypeptide: Elongation factor Ts (347 aa).

The segment at 80 to 83 (TDFV) is involved in Mg(2+) ion dislocation from EF-Tu.

It belongs to the EF-Ts family.

The protein resides in the cytoplasm. Functionally, associates with the EF-Tu.GDP complex and induces the exchange of GDP to GTP. It remains bound to the aminoacyl-tRNA.EF-Tu.GTP complex up to the GTP hydrolysis stage on the ribosome. The sequence is that of Elongation factor Ts from Streptococcus sanguinis (strain SK36).